We begin with the raw amino-acid sequence, 428 residues long: GTPase HflX (428 aa).

The Hflx-type G domain occupies 214–374 (PVVAIVGYTN…AIERELFKET (161 aa)). GTP is bound by residues 220 to 227 (GYTNAGKS), 245 to 249 (FATLD), 267 to 270 (DTVG), 333 to 336 (NKID), and 352 to 354 (SAK). Residues Ser-227 and Thr-247 each contribute to the Mg(2+) site.

Belongs to the TRAFAC class OBG-HflX-like GTPase superfamily. HflX GTPase family. Monomer. Associates with the 50S ribosomal subunit. The cofactor is Mg(2+).

It localises to the cytoplasm. In terms of biological role, GTPase that associates with the 50S ribosomal subunit and may have a role during protein synthesis or ribosome biogenesis. This Caldanaerobacter subterraneus subsp. tengcongensis (strain DSM 15242 / JCM 11007 / NBRC 100824 / MB4) (Thermoanaerobacter tengcongensis) protein is GTPase HflX.